The sequence spans 1108 residues: Activity-dependent neuroprotector homeobox protein (1108 aa).

Residues 1 to 685 form a binds to beta-catenin/CTNNB1 region; that stretch reads MFQLPVNNLG…ASTITLHLVH (685 aa). Glycyl lysine isopeptide (Lys-Gly) (interchain with G-Cter in SUMO2) cross-links involve residues Lys-39 and Lys-72. A C2H2-type 1; degenerate zinc finger spans residues 74 to 97; sequence FCCSACPFSSKFFSAYKSHFRNVH. Ser-98 bears the Phosphoserine mark. A C2H2-type 2; degenerate zinc finger spans residues 107-129; sequence LNCPYCTFNADKKTLETHIKIFH. The disordered stretch occupies residues 133-154; it reads SSAPSSSLSTFKDKNKNDGLKP. The segment covering 143–154 has biased composition (basic and acidic residues); it reads FKDKNKNDGLKP. Glycyl lysine isopeptide (Lys-Gly) (interchain with G-Cter in SUMO2) cross-links involve residues Lys-144 and Lys-155. A C2H2-type 3; degenerate zinc finger spans residues 165 to 188; that stretch reads YYCKKCTYRDPLYEIVRKHIYREH. Glycyl lysine isopeptide (Lys-Gly) (interchain with G-Cter in SUMO2) cross-links involve residues Lys-203, Lys-231, Lys-266, Lys-274, Lys-278, Lys-279, Lys-311, and Lys-335. Residues 221-244 form a C2H2-type 4; degenerate zinc finger; the sequence is IHCKRCLFMPKSYEALVQHVIEDH. At Arg-348 the chain carries Asymmetric dimethylarginine. The tract at residues 354–361 is neuroprotective peptide; contributes to CTNNB1-binding, but less effective than whole N-terminal region; it reads NAPVSIPQ. Residues 360 to 438 form a disordered region; the sequence is PQQSQSVKQL…PAATGPPPSN (79 aa). Glycyl lysine isopeptide (Lys-Gly) (interchain with G-Cter in SUMO2) cross-links involve residues Lys-367 and Lys-407. A compositionally biased stretch (polar residues) spans 393–422; the sequence is SLQTANTSLPPGQVKSPSVSQSQASRVLGQ. Residues Ser-408 and Ser-412 each carry the phosphoserine modification. Lys-426 is covalently cross-linked (Glycyl lysine isopeptide (Lys-Gly) (interchain with G-Cter in SUMO2)). The span at 426 to 437 shows a compositional bias: pro residues; the sequence is KPPPAATGPPPS. A C2H2-type 5; atypical zinc finger spans residues 446-468; the sequence is KICTICNELFPENVYSVHFEKEH. C2H2-type zinc fingers lie at residues 488–509 and 511–534; these read SKCL…MLIH and LSCP…RMVH. Glycyl lysine isopeptide (Lys-Gly) (interchain with G-Cter in SUMO2) cross-links involve residues Lys-599 and Lys-605. Ser-607 is subject to Phosphoserine. Glycyl lysine isopeptide (Lys-Gly) (interchain with G-Cter in SUMO2) cross-links involve residues Lys-615, Lys-620, Lys-631, and Lys-657. The C2H2-type 8; atypical zinc-finger motif lies at 621-646; it reads TLCPLCFSILKGPISDALAHHLRERH. The C2H2-type 9; atypical zinc finger occupies 661–685; that stretch reads YKCIHCLGVYTSNMTASTITLHLVH. The tract at residues 690 to 711 is disordered; sequence GKTQNGQDKTNAPSRLNQSPGL. The segment covering 691–709 has biased composition (polar residues); that stretch reads KTQNGQDKTNAPSRLNQSP. Lys-698 participates in a covalent cross-link: Glycyl lysine isopeptide (Lys-Gly) (interchain with G-Cter in SUMO2). The residue at position 708 (Ser-708) is a Phosphoserine. Glycyl lysine isopeptide (Lys-Gly) (interchain with G-Cter in SUMO2) cross-links involve residues Lys-715, Lys-727, and Lys-730. Ser-737 is modified (phosphoserine). Residue Lys-744 forms a Glycyl lysine isopeptide (Lys-Gly) (interchain with G-Cter in SUMO2) linkage. Residues 753 to 813 constitute a DNA-binding region (homeobox); the sequence is LDPKGHEDDS…SNKRKKCVRD (61 aa). Ser-804 carries the phosphoserine modification. Glycyl lysine isopeptide (Lys-Gly) (interchain with G-Cter in SUMO2) cross-links involve residues Lys-806, Lys-828, and Lys-834. Over residues 851–880 the composition is skewed to basic and acidic residues; the sequence is KDSRVNASKTVDKKHNLGKEDDSFSDSFEH. Positions 851 to 1037 are disordered; the sequence is KDSRVNASKT…DTEQLKWKNS (187 aa). Phosphoserine occurs at positions 875, 877, 885, 888, and 904. Residues Lys-913, Lys-928, and Lys-941 each participate in a glycyl lysine isopeptide (Lys-Gly) (interchain with G-Cter in SUMO2) cross-link. The span at 928–938 shows a compositional bias: acidic residues; that stretch reads KEEEEEEEEED. Over residues 939-959 the composition is skewed to basic and acidic residues; that stretch reads GSKYETIHLTEEPAKLMHDAS. A phosphoserine mark is found at Ser-959 and Ser-961. Residues 977 to 988 are compositionally biased toward polar residues; it reads PSESGPGSQQIS. A Glycyl lysine isopeptide (Lys-Gly) (interchain with G-Cter in SUMO2) cross-link involves residue Lys-1022. An N6-acetyllysine; alternate mark is found at Lys-1041 and Lys-1048. Glycyl lysine isopeptide (Lys-Gly) (interchain with G-Cter in SUMO2); alternate cross-links involve residues Lys-1041 and Lys-1048. Residues 1050–1108 are disordered; that stretch reads QSQWENASENAERLPNPQIEWQNSTIDSEDGEQFDSMTDGVADPMHGSLTGVKLSSQQA. At Ser-1077 the chain carries Phosphoserine.

As to quaternary structure, interacts (via N-terminal region) with beta-catenin/CTNNB1 (via the central armadillo domains); interaction is direct and stabilizes CTNNB1 by modulating its phosphorylation by glycogen synthase kinase-3 beta GSK3B. In terms of tissue distribution, expressed in the brain, with a higher expression in cerebellum and hippocampus. Weakly expressed in lung, kidney and intestine, and expressed at intermediate level in testis.

It is found in the nucleus. It localises to the chromosome. Functionally, may be involved in transcriptional regulation. May mediate some of the neuroprotective peptide VIP-associated effects involving normal growth and cancer proliferation. Positively modulates WNT-beta-catenin/CTNN1B signaling, acting by regulating phosphorylation of, and thereby stabilizing, CTNNB1. May be required for neural induction and neuronal differentiation. May be involved in erythroid differentiation. The sequence is that of Activity-dependent neuroprotector homeobox protein (Adnp) from Mus musculus (Mouse).